The primary structure comprises 880 residues: Valine--tRNA ligase (880 aa).

The 'HIGH' region motif lies at 46–56; sequence PNVTGKLHLGH. A 'KMSKS' region motif is present at residues 520–524; sequence KMSKS. Lys523 is an ATP binding site. Residues 808-880 are a coiled coil; the sequence is LAGLINIEEE…KARIAELKEN (73 aa).

This sequence belongs to the class-I aminoacyl-tRNA synthetase family. ValS type 1 subfamily. Monomer.

The protein localises to the cytoplasm. The enzyme catalyses tRNA(Val) + L-valine + ATP = L-valyl-tRNA(Val) + AMP + diphosphate. Its function is as follows. Catalyzes the attachment of valine to tRNA(Val). As ValRS can inadvertently accommodate and process structurally similar amino acids such as threonine, to avoid such errors, it has a 'posttransfer' editing activity that hydrolyzes mischarged Thr-tRNA(Val) in a tRNA-dependent manner. The polypeptide is Valine--tRNA ligase (Lactococcus lactis subsp. lactis (strain IL1403) (Streptococcus lactis)).